The sequence spans 302 residues: Ribosomal RNA small subunit methyltransferase H (302 aa).

Residues 34 to 36, Asp-53, Phe-80, Asp-101, and Gln-108 each bind S-adenosyl-L-methionine; that span reads AGH. Residues 283–302 form a disordered region; it reads LEENPRSKSAKMRVLKKIER. Residues 290–302 show a composition bias toward basic residues; it reads KSAKMRVLKKIER.

Belongs to the methyltransferase superfamily. RsmH family.

The protein resides in the cytoplasm. It carries out the reaction cytidine(1402) in 16S rRNA + S-adenosyl-L-methionine = N(4)-methylcytidine(1402) in 16S rRNA + S-adenosyl-L-homocysteine + H(+). Functionally, specifically methylates the N4 position of cytidine in position 1402 (C1402) of 16S rRNA. The protein is Ribosomal RNA small subunit methyltransferase H of Mycoplasma mobile (strain ATCC 43663 / 163K / NCTC 11711) (Mesomycoplasma mobile).